The primary structure comprises 188 residues: Peroxynitrite isomerase (188 aa).

The GXWXGXG signature appears at 35–41 (GTWRGEG). Residue histidine 178 participates in heme b binding.

The protein belongs to the nitrobindin family. As to quaternary structure, homodimer. It depends on heme b as a cofactor.

The catalysed reaction is peroxynitrite = nitrate. The protein operates within nitrogen metabolism. Functionally, heme-binding protein able to scavenge peroxynitrite and to protect free L-tyrosine against peroxynitrite-mediated nitration, by acting as a peroxynitrite isomerase that converts peroxynitrite to nitrate. Therefore, this protein likely plays a role in peroxynitrite sensing and in the detoxification of reactive nitrogen and oxygen species (RNS and ROS, respectively). Is able to bind nitric oxide (NO) in vitro, but may act as a sensor of peroxynitrite levels in vivo. The chain is Peroxynitrite isomerase from Frankia casuarinae (strain DSM 45818 / CECT 9043 / HFP020203 / CcI3).